The following is a 528-amino-acid chain: 4-nitrophenol 4-monooxygenase/4-nitrocatechol 2-monooxygenase, oxygenase component (528 aa).

100–104 (RPPAG) serves as a coordination point for substrate. FAD-binding positions include 153-155 (PMF), 159-162 (QFDR), and threonine 194. 205 to 206 (GN) lines the substrate pocket. 461 to 464 (TMQR) is a binding site for FAD.

Belongs to the FADH(2)-utilizing monooxygenase family. The 4-NP/4-NCA monooxygenase is composed of an oxygenase component NpcA and a reductase component NpcB. The cofactor is FAD.

It catalyses the reaction 4-nitrophenol + NADH + O2 + H(+) = 4-nitrocatechol + NAD(+) + H2O. It carries out the reaction 4-nitrocatechol + NADPH + O2 = 2-hydroxy-1,4-benzoquinone + nitrite + NADP(+) + H2O. The catalysed reaction is 4-nitrocatechol + NADH + O2 = 2-hydroxy-1,4-benzoquinone + nitrite + NAD(+) + H2O. It functions in the pathway aromatic compound metabolism. Its pathway is xenobiotic degradation. Its activity is regulated as follows. Inhibited by methimazole. In terms of biological role, involved in the degradation of para-nitrophenol (4-NP). Catalyzes both the initial hydroxylation of 4-NP to produce 4-nitrocatechol (4-NCA) and the subsequent oxidative release of the nitro group from 4-NCA to produce 2-hydroxy-1,4-benzoquinone. It can also use 4-nitroresorcinol as substrate with a rate of nitrite release similar to that observed with the two physiological substrates, 4-PN and 4-NCA. The polypeptide is 4-nitrophenol 4-monooxygenase/4-nitrocatechol 2-monooxygenase, oxygenase component (npcA) (Rhodococcus opacus (Nocardia opaca)).